We begin with the raw amino-acid sequence, 90 residues long: Small ribosomal subunit protein uS15 (90 aa).

This sequence belongs to the universal ribosomal protein uS15 family. Part of the 30S ribosomal subunit. Forms a bridge to the 50S subunit in the 70S ribosome, contacting the 23S rRNA.

One of the primary rRNA binding proteins, it binds directly to 16S rRNA where it helps nucleate assembly of the platform of the 30S subunit by binding and bridging several RNA helices of the 16S rRNA. In terms of biological role, forms an intersubunit bridge (bridge B4) with the 23S rRNA of the 50S subunit in the ribosome. In Aquifex aeolicus (strain VF5), this protein is Small ribosomal subunit protein uS15.